Here is a 94-residue protein sequence, read N- to C-terminus: Pyrimidine/purine nucleoside phosphorylase (94 aa).

The protein belongs to the nucleoside phosphorylase PpnP family.

It catalyses the reaction a purine D-ribonucleoside + phosphate = a purine nucleobase + alpha-D-ribose 1-phosphate. The enzyme catalyses adenosine + phosphate = alpha-D-ribose 1-phosphate + adenine. It carries out the reaction cytidine + phosphate = cytosine + alpha-D-ribose 1-phosphate. The catalysed reaction is guanosine + phosphate = alpha-D-ribose 1-phosphate + guanine. It catalyses the reaction inosine + phosphate = alpha-D-ribose 1-phosphate + hypoxanthine. The enzyme catalyses thymidine + phosphate = 2-deoxy-alpha-D-ribose 1-phosphate + thymine. It carries out the reaction uridine + phosphate = alpha-D-ribose 1-phosphate + uracil. The catalysed reaction is xanthosine + phosphate = alpha-D-ribose 1-phosphate + xanthine. Functionally, catalyzes the phosphorolysis of diverse nucleosides, yielding D-ribose 1-phosphate and the respective free bases. Can use uridine, adenosine, guanosine, cytidine, thymidine, inosine and xanthosine as substrates. Also catalyzes the reverse reactions. In Salmonella paratyphi C (strain RKS4594), this protein is Pyrimidine/purine nucleoside phosphorylase.